A 1009-amino-acid chain; its full sequence is Rho GTPase-activating protein gacT (1009 aa).

Disordered regions lie at residues 1 to 72 and 89 to 117; these read MKNI…SRNH and TSHHSHSHNHNHNHNHQLTQPIQQQQQTQ. Residues 12–23 show a composition bias toward basic and acidic residues; it reads FHKDKKEGDKQD. Over residues 26–35 the composition is skewed to low complexity; that stretch reads GSSGSSGNSG. Polar residues predominate over residues 58-69; that stretch reads ESYSGDNSPTLS. Positions 89 to 103 are enriched in basic residues; that stretch reads TSHHSHSHNHNHNHN. Residues 104-117 show a composition bias toward low complexity; that stretch reads HQLTQPIQQQQQTQ. The region spanning 163–351 is the Rho-GAP domain; the sequence is VPLTQVPCRA…EVFPQHHLYY (189 aa). Disordered stretches follow at residues 388-420, 432-482, and 508-571; these read TISGLLPSNGQNNSPSSSTITSTTITSPHDSTA, PEQQ…TFRV, and GPSG…TTDQ. 3 stretches are compositionally biased toward low complexity: residues 394–415, 432–468, and 512–521; these read PSNGQNNSPSSSTITSTTITSP, PEQQQQMLQQQQQQQQQQEKQSSSSLSQSQQSIQPIS, and TTGTTPNGGS. Positions 522-546 are enriched in gly residues; the sequence is LSIGGGNGGNGGSSLSVGSGGGNGG. The span at 547-557 shows a compositional bias: low complexity; sequence SSLSVGSNTSV. A coiled-coil region spans residues 580–656; that stretch reads AYTNNEDTKA…IEREIEKKRL (77 aa). Positions 686-713 are disordered; it reads ISTIDGSGGSNRNSKNYGNGSSSSSNRR. A compositionally biased stretch (low complexity) spans 695–713; it reads SNRNSKNYGNGSSSSSNRR. A coiled-coil region spans residues 715 to 743; the sequence is SNTINQQLQMQLQQLQIQQQQYQQTQQSQ. The disordered stretch occupies residues 759-781; it reads TTTTTTTSSGSNRFSSNRYKPVD. The segment covering 766–781 has biased composition (polar residues); that stretch reads SSGSNRFSSNRYKPVD. Residues 839-952 are a coiled coil; that stretch reads ENLVLLQQQY…IEEIHLLETY (114 aa). Residues 965 to 1009 form a disordered region; it reads STTKDLLTRSRSPTLPSSINMSTSSLGSSSSSAYNNNNNNNNVPK. Over residues 967–980 the composition is skewed to polar residues; it reads TKDLLTRSRSPTLP. The span at 981 to 1009 shows a compositional bias: low complexity; that stretch reads SSINMSTSSLGSSSSSAYNNNNNNNNVPK.

It is found in the cytoplasm. Rho GTPase-activating protein involved in the signal transduction pathway. In Dictyostelium discoideum (Social amoeba), this protein is Rho GTPase-activating protein gacT (gacT).